Here is a 459-residue protein sequence, read N- to C-terminus: Cysteine--tRNA ligase (459 aa).

Cys-27 contributes to the Zn(2+) binding site. A 'HIGH' region motif is present at residues 29-39 (VTVYDDCHIGH). 3 residues coordinate Zn(2+): Cys-208, His-233, and Glu-237. The short motif at 265–269 (KMSKS) is the 'KMSKS' region element. Lys-268 contacts ATP.

This sequence belongs to the class-I aminoacyl-tRNA synthetase family. As to quaternary structure, monomer. The cofactor is Zn(2+).

It localises to the cytoplasm. It carries out the reaction tRNA(Cys) + L-cysteine + ATP = L-cysteinyl-tRNA(Cys) + AMP + diphosphate. The protein is Cysteine--tRNA ligase of Francisella tularensis subsp. mediasiatica (strain FSC147).